Reading from the N-terminus, the 192-residue chain is GTP cyclohydrolase-2 (192 aa).

50 to 54 (RLHSE) serves as a coordination point for GTP. Zn(2+) is bound by residues Cys55, Cys66, and Cys68. GTP contacts are provided by residues 92-94 (EGR) and Thr114. Asp126 functions as the Proton acceptor in the catalytic mechanism. Arg128 (nucleophile) is an active-site residue. Residues Thr149 and Lys154 each contribute to the GTP site.

It belongs to the GTP cyclohydrolase II family. It depends on Zn(2+) as a cofactor.

It catalyses the reaction GTP + 4 H2O = 2,5-diamino-6-hydroxy-4-(5-phosphoribosylamino)-pyrimidine + formate + 2 phosphate + 3 H(+). It participates in cofactor biosynthesis; riboflavin biosynthesis; 5-amino-6-(D-ribitylamino)uracil from GTP: step 1/4. In terms of biological role, catalyzes the conversion of GTP to 2,5-diamino-6-ribosylamino-4(3H)-pyrimidinone 5'-phosphate (DARP), formate and pyrophosphate. The chain is GTP cyclohydrolase-2 from Helicobacter pylori (strain Shi470).